Here is a 329-residue protein sequence, read N- to C-terminus: Malate dehydrogenase (329 aa).

An NAD(+)-binding site is contributed by 11–17 (GAAGQIG). Arg92 and Arg98 together coordinate substrate. Residues Asn105, Gln112, and 129–131 (VGN) contribute to the NAD(+) site. The substrate site is built by Asn131 and Arg165. The Proton acceptor role is filled by His190.

Belongs to the LDH/MDH superfamily. MDH type 2 family.

The enzyme catalyses (S)-malate + NAD(+) = oxaloacetate + NADH + H(+). Its function is as follows. Catalyzes the reversible oxidation of malate to oxaloacetate. This Laribacter hongkongensis (strain HLHK9) protein is Malate dehydrogenase.